A 466-amino-acid polypeptide reads, in one-letter code: CBL-interacting protein kinase 20 (466 aa).

A Protein kinase domain is found at 12-276 (YELGRSLGHG…IDELVKHPWF (265 aa)). ATP contacts are provided by residues 18 to 26 (LGHGTFSKV) and Lys41. Asp139 functions as the Proton acceptor in the catalytic mechanism. An activation loop region spans residues 162–191 (DFGLSALSASRRHDGLLHTTCGTPSYVAPE). Positions 297-329 (KPANAAMNMKPASLNAFDIISLSQGFDLSGMFC) constitute an NAF domain. Residues 337–366 (TQDQLFVTGKPATAIVSRLEEIAETEHFTV) form a PPI region. Residues 446 to 466 (ASEKNQLPAVSEVSPLSSPRN) are disordered.

It belongs to the protein kinase superfamily. CAMK Ser/Thr protein kinase family. SNF1 subfamily. Requires Mn(2+) as cofactor.

The enzyme catalyses L-seryl-[protein] + ATP = O-phospho-L-seryl-[protein] + ADP + H(+). It carries out the reaction L-threonyl-[protein] + ATP = O-phospho-L-threonyl-[protein] + ADP + H(+). In terms of biological role, CIPK serine-threonine protein kinases interact with CBL proteins. Binding of a CBL protein to the regulatory NAF domain of CIPK protein lead to the activation of the kinase in a calcium-dependent manner. The sequence is that of CBL-interacting protein kinase 20 (CIPK20) from Oryza sativa subsp. japonica (Rice).